The following is a 599-amino-acid chain: MSELHNPDQSSRALFDLCRVLLKGIYGELSAVLVGSLLDYGRQTAAELAKTTKLPLSAVHSGLAALVQNRFVLYWANDRKSGRDTDDIGESSSIHYVANWKEIYQVVRAGGMVDAVRKDFGKGPGGKSNPESGERCAEIAQNLLVYGHMRVADYLEATPEHDRDSVEASIAVMLRKRFLVPVQAWQFKPETDLYARMFRDHLSKLPLSMAESARKNQAAVSAKTELERMQEERNSLNLGFVSGSVARTKGVPVLNRAEKLDHQAVLCANPDKFLVIARNEELAKLAEERCGKTAAEVYRQCLSKYVGRLHSCTQDTSPGAEFNITSMEIAKTIDPRLDGLRPRGKGSRSVSPRPQSKRVKTEEGYTKTGDYDEKEVDVEEDMEEELSGVALATAVSKQMQILAASPLKFVQSVGTKGGGEWYVNFKEATECLRGARYEQIIQWKYGRVAKRLLRAVKDKGKVDEKLLTNIALLPVKEILNHLHDLHSVGALDVQELPRTADRAASRTIFLWHHRANRAYSLISQDIYKSLSRCFERVAAERAKLPILLSKLQREDVKGHEDEFLTEQEKADLKGLRMREEKLLVQMNRLDGLIRVFRDY.

The segment at 335–371 (PRLDGLRPRGKGSRSVSPRPQSKRVKTEEGYTKTGDY) is disordered. Residues 359 to 371 (VKTEEGYTKTGDY) show a composition bias toward basic and acidic residues. The segment at 526-547 (IYKSLSRCFERVAAERAKLPIL) is leucine-zipper.

The protein belongs to the RNA polymerase beta chain family. Component of the RNA polymerase III (Pol III) complex consisting of 17 subunits.

It localises to the nucleus. DNA-dependent RNA polymerase catalyzes the transcription of DNA into RNA using the four ribonucleoside triphosphates as substrates. Specific core component of RNA polymerase III which synthesizes small RNAs, such as 5S rRNA and tRNAs. In Yarrowia lipolytica (strain CLIB 122 / E 150) (Yeast), this protein is DNA-directed RNA polymerase III subunit RPC3 (RPC82).